Reading from the N-terminus, the 265-residue chain is MSDIIIAFILGIVEGLAEFLPISSTGHLILVGHLLGFEGERAKTFEIVIQLGAILAIAILYHKRLVSLCNIKPLLRKEKKFNAFHVFLGVFPAVVAGLLLHDVIKTYLFQPYTVVIGLVAGAILMILAEVKKQEATACSLDDLTYRQALTIGFFQCLAVYPGFSRAGSTISGGLLAKVNYKTASEFSFLIALPVMVGATSLDLLKSWKYLSVDDIPMFAVGFITSFIVAMLAVVTFLKLLEKIGLKPFAYYRILLAILFTLFVLL.

A run of 7 helical transmembrane segments spans residues 4-24 (IIIA…PISS), 42-62 (AKTF…ILYH), 84-104 (FHVF…HDVI), 108-128 (LFQP…MILA), 184-204 (SEFS…LDLL), 217-237 (MFAV…VTFL), and 245-265 (LKPF…FVLL).

This sequence belongs to the UppP family.

The protein localises to the cell membrane. It carries out the reaction di-trans,octa-cis-undecaprenyl diphosphate + H2O = di-trans,octa-cis-undecaprenyl phosphate + phosphate + H(+). Catalyzes the dephosphorylation of undecaprenyl diphosphate (UPP). Confers resistance to bacitracin. The sequence is that of Undecaprenyl-diphosphatase 1 from Bacillus cereus (strain ZK / E33L).